A 148-amino-acid polypeptide reads, in one-letter code: UPF0756 membrane protein YeaL (148 aa).

4 helical membrane-spanning segments follow: residues 14-34 (ALGF…LIIV), 51-71 (LSIG…SGTL), 86-106 (LVAI…VTLM), and 121-141 (VLGV…AGLV).

It belongs to the UPF0756 family.

It is found in the cell membrane. The protein is UPF0756 membrane protein YeaL of Shigella flexneri.